The following is a 610-amino-acid chain: NTPase KAP family P-loop domain-containing protein 1 (610 aa).

The KAP NTPase domain occupies 1–414 (MQQEAAQRES…NTVPITVRLL (414 aa)). Helical transmembrane passes span 22-42 (AVSGWGVPQLLWYLVFLQPII), 118-138 (VCLGLLALLAALGLGVGLLYL), and 157-177 (VFGGAATTLSGSGLLMAVYSV). The interval 540-587 (ALKPPSPPKSPTRDTPHAAHRANSASRAPPSGRASGQAGEGHHTGDLA) is disordered. A compositionally biased stretch (low complexity) spans 560–575 (RANSASRAPPSGRASG).

Its subcellular location is the membrane. The polypeptide is NTPase KAP family P-loop domain-containing protein 1 (NKPD1) (Homo sapiens (Human)).